We begin with the raw amino-acid sequence, 114 residues long: Propane 2-monooxygenase, effector component (114 aa).

This sequence belongs to the TmoD/XamoD family. In terms of assembly, the propane 2-monooxygenase multicomponent enzyme system is composed of an electron transfer component and a monooxygenase component interacting with the effector protein MimD. The electron transfer component is composed of a reductase (MimB), and the monooxygenase component is formed by a large subunit (MimA) and a small subunit (MimC).

Effector component of the propane 2-monooxygenase multicomponent enzyme system which is involved in the degradation of propane via the O2-dependent hydroxylation of propane. The protein is Propane 2-monooxygenase, effector component of Mycolicibacterium smegmatis (strain ATCC 700084 / mc(2)155) (Mycobacterium smegmatis).